The following is a 277-amino-acid chain: MAVAYADKPNHFINFPLTQFEGFVLNYKGLQFQLLDEGVDCKIQTAPHISLAMLDIQPEDYRSVDVAIQEVIDDMHWGEGFQIKFDNPHILGRCIVLDVKGVEELHDDLVNYIRDKGCVADQSRKWIGHCTIAQLTDAALSIKENVDFINSMQFNYKITINPSSPARLEIVKLGAEKKDGFYETIVSHWMGSRFEYNPPTDKLAMIMGYCCSEVVRKELEEGDLPENDDDAWFKLSYHYENNSWFFRHVYRKVLISVSLVNLDCNCLGFYESPVEED.

Belongs to the coronaviruses ns2a protein family.

The protein is Non-structural protein 2a of Bovine coronavirus (strain Quebec) (BCoV).